A 337-amino-acid chain; its full sequence is Glyceraldehyde-3-phosphate dehydrogenase, cytosolic (337 aa).

Residues 13–14 (RI), aspartate 35, and arginine 82 contribute to the NAD(+) site. D-glyceraldehyde 3-phosphate contacts are provided by residues 153–155 (SCT), threonine 184, 213–214 (TG), and arginine 236. Residue cysteine 154 is the Nucleophile of the active site. Asparagine 318 is a binding site for NAD(+).

It belongs to the glyceraldehyde-3-phosphate dehydrogenase family. Homotetramer.

It localises to the cytoplasm. The enzyme catalyses D-glyceraldehyde 3-phosphate + phosphate + NAD(+) = (2R)-3-phospho-glyceroyl phosphate + NADH + H(+). It participates in carbohydrate degradation; glycolysis; pyruvate from D-glyceraldehyde 3-phosphate: step 1/5. Key enzyme in glycolysis that catalyzes the first step of the pathway by converting D-glyceraldehyde 3-phosphate (G3P) into 3-phospho-D-glyceroyl phosphate. Essential for the maintenance of cellular ATP levels and carbohydrate metabolism. The sequence is that of Glyceraldehyde-3-phosphate dehydrogenase, cytosolic (GAPC) from Antirrhinum majus (Garden snapdragon).